A 165-amino-acid polypeptide reads, in one-letter code: Crossover junction endodeoxyribonuclease RuvC (165 aa).

Catalysis depends on residues D7, E67, and D140. The Mg(2+) site is built by D7, E67, and D140.

It belongs to the RuvC family. In terms of assembly, homodimer which binds Holliday junction (HJ) DNA. The HJ becomes 2-fold symmetrical on binding to RuvC with unstacked arms; it has a different conformation from HJ DNA in complex with RuvA. In the full resolvosome a probable DNA-RuvA(4)-RuvB(12)-RuvC(2) complex forms which resolves the HJ. The cofactor is Mg(2+).

It is found in the cytoplasm. The catalysed reaction is Endonucleolytic cleavage at a junction such as a reciprocal single-stranded crossover between two homologous DNA duplexes (Holliday junction).. The RuvA-RuvB-RuvC complex processes Holliday junction (HJ) DNA during genetic recombination and DNA repair. Endonuclease that resolves HJ intermediates. Cleaves cruciform DNA by making single-stranded nicks across the HJ at symmetrical positions within the homologous arms, yielding a 5'-phosphate and a 3'-hydroxyl group; requires a central core of homology in the junction. The consensus cleavage sequence is 5'-(A/T)TT(C/G)-3'. Cleavage occurs on the 3'-side of the TT dinucleotide at the point of strand exchange. HJ branch migration catalyzed by RuvA-RuvB allows RuvC to scan DNA until it finds its consensus sequence, where it cleaves and resolves the cruciform DNA. The chain is Crossover junction endodeoxyribonuclease RuvC from Dehalococcoides mccartyi (strain ATCC BAA-2266 / KCTC 15142 / 195) (Dehalococcoides ethenogenes (strain 195)).